Here is a 94-residue protein sequence, read N- to C-terminus: Putative pterin-4-alpha-carbinolamine dehydratase (94 aa).

The protein belongs to the pterin-4-alpha-carbinolamine dehydratase family.

It catalyses the reaction (4aS,6R)-4a-hydroxy-L-erythro-5,6,7,8-tetrahydrobiopterin = (6R)-L-erythro-6,7-dihydrobiopterin + H2O. The protein is Putative pterin-4-alpha-carbinolamine dehydratase of Mycobacterium sp. (strain KMS).